The following is a 155-amino-acid chain: Small ribosomal subunit protein uS7 (155 aa).

This sequence belongs to the universal ribosomal protein uS7 family. In terms of assembly, part of the 30S ribosomal subunit. Contacts proteins S9 and S11.

Its function is as follows. One of the primary rRNA binding proteins, it binds directly to 16S rRNA where it nucleates assembly of the head domain of the 30S subunit. Is located at the subunit interface close to the decoding center, probably blocks exit of the E-site tRNA. This chain is Small ribosomal subunit protein uS7, found in Xylella fastidiosa (strain M23).